Reading from the N-terminus, the 401-residue chain is Methyltransferase cfoC (401 aa).

Residue Asp-268 participates in S-adenosyl-L-methionine binding. The active-site Proton acceptor is His-308.

The protein belongs to the class I-like SAM-binding methyltransferase superfamily. Cation-independent O-methyltransferase family.

Its pathway is secondary metabolite biosynthesis; flavonoid biosynthesis. Functionally, methyltransferase; part of the gene cluster that mediates the biosynthesis of chlorflavonin, a fungal flavonoid with acetolactate synthase inhibitory activity. Within the pathway, cfoC is responsible for the methylation at position C8-OH of flavonoid. The pathway begins with the PKS-NRPS hybrid synthetase cfoA that uses benzoic acid or p-hydroxybenzoic acid as a starter unit with four rounds of chain elongation using malonyl-CoA to form the chalcone skeleton. Then, a new type of chalcone isomerase, cfoK, catalyzes the conversion of the chalcone into a flavanone by a histidine-mediated oxa-Michael addition mechanism. The desaturation of flavanone to flavone is catalyzed by a new type of flavone synthase, the flavin mononucleotide (FMN)-dependent oxidoreductase cfoJ. Monooxygenases cfoF, cfoG, and P450 cfoH are responsible for the hydroxylation of the flavonoid skeleton at sites C3, C8, and C2', respectively. Like cfoF, the dehydratase cfoI also plays a role in the hydroxylation of position C3. Methyltransferases cfoB, cfoC, and cfoD then catalyze the methylation of C7-OH, C8-OH, and C3-OH, respectively. Finally, the monooxygenase cfoE is responsible for the chlorination of flavonoid at position C3'. The chain is Methyltransferase cfoC from Aspergillus candidus.